The primary structure comprises 281 residues: Proline iminopeptidase PfmaB (281 aa).

One can recognise an AB hydrolase-1 domain in the interval 23-267; sequence PLVITLHGGR…NANHSVHVEK (245 aa).

This sequence belongs to the peptidase S33 family.

It catalyses the reaction Release of N-terminal proline from a peptide.. Functionally, proline iminopeptidase; part of the gene cluster that mediates the biosynthesis of dihydroxynaphthalene (DHN)-melanin, a bluish-green pigment forming a dark layer in the conidial wall that protects the conidia from UV radiations. The first step of the pathway is the production of the pentaketide 1,3,6,8-tetrahydroxynaphthalene (1,3,6,8-THN or T4HN) by the polyketide synthase PfmaE though condensation of acetyl-CoA with malonyl-CoA. T4HN is not stable and easily oxidizes into the stable form flaviolin. T4HN is also substrate of the hydroxynaphthalene reductase PfmaG to yield scytalone. The scytalone dehydratase PfmaJ then reduces scytalone to 1,3,8-THN. 1,3,8-THN is then substrate of the hydroxynaphthalene reductase PfmaI to yield vermelone. Vermelone is further converted by the multicopper oxidase PfmaD to 1,8-DHN. Finally the laccase PFICI_06862 transforms 1,8-DHN to DHN-melanin. The roles of the 5-oxoprolinase PfmaA and the proline iminopeptidase PfmaB within the cluster have not been elucidated yet. The chain is Proline iminopeptidase PfmaB from Pestalotiopsis fici (strain W106-1 / CGMCC3.15140).